A 395-amino-acid polypeptide reads, in one-letter code: Beta-1,4-galactosyltransferase 3 (395 aa).

At M1–C10 the chain is on the cytoplasmic side. Residues T11 to F31 traverse the membrane as a helical; Signal-anchor for type II membrane protein segment. Residues R32–H395 are Lumenal-facing. N-linked (GlcNAc...) asparagine glycosylation occurs at N57. The cysteines at positions 79 and 121 are disulfide-linked. Residues P132–R136, F171–R173, V198–D199, Y228, and W260 contribute to the UDP-alpha-D-galactose site. C192 and C211 are oxidised to a cystine. D199 lines the Mn(2+) pocket. G262–D265 contributes to the N-acetyl-D-glucosamine binding site. H293 is a Mn(2+) binding site. H293 to G295 is a binding site for UDP-alpha-D-galactose. Position 305 (R305) interacts with N-acetyl-D-glucosamine. 2 N-linked (GlcNAc...) asparagine glycosylation sites follow: N339 and N387. Residues T341–H395 are disordered.

This sequence belongs to the glycosyltransferase 7 family. The cofactor is Mn(2+).

The protein resides in the golgi apparatus. It localises to the golgi stack membrane. It carries out the reaction an N-acetyl-beta-D-glucosaminyl derivative + UDP-alpha-D-galactose = a beta-D-galactosyl-(1-&gt;4)-N-acetyl-beta-D-glucosaminyl derivative + UDP + H(+). It catalyses the reaction N-acetyl-D-glucosamine + UDP-alpha-D-galactose = beta-D-galactosyl-(1-&gt;4)-N-acetyl-D-glucosamine + UDP + H(+). The catalysed reaction is a beta-D-GlcNAc-(1-&gt;3)-beta-D-Gal-(1-&gt;4)-beta-D-Glc-(1&lt;-&gt;1)-Cer(d18:1(4E)) + UDP-alpha-D-galactose = a neolactoside nLc4Cer(d18:1(4E)) + UDP + H(+). The enzyme catalyses a beta-D-glucosylceramide + UDP-alpha-D-galactose = a beta-D-galactosyl-(1-&gt;4)-beta-D-glucosyl-(1&lt;-&gt;1)-ceramide + UDP + H(+). It carries out the reaction a neolactoside IV(3)-beta-GlcNAc-nLc4Cer + UDP-alpha-D-galactose = a neolactoside nLc6Cer + UDP + H(+). It participates in protein modification; protein glycosylation. Functionally, responsible for the synthesis of complex-type N-linked oligosaccharides in many glycoproteins as well as the carbohydrate moieties of glycolipids. In Cricetulus griseus (Chinese hamster), this protein is Beta-1,4-galactosyltransferase 3 (B4GALT3).